A 262-amino-acid polypeptide reads, in one-letter code: Acyl-[acyl-carrier-protein]--UDP-N-acetylglucosamine O-acyltransferase (262 aa).

This sequence belongs to the transferase hexapeptide repeat family. LpxA subfamily. As to quaternary structure, homotrimer.

It localises to the cytoplasm. The enzyme catalyses a (3R)-hydroxyacyl-[ACP] + UDP-N-acetyl-alpha-D-glucosamine = a UDP-3-O-[(3R)-3-hydroxyacyl]-N-acetyl-alpha-D-glucosamine + holo-[ACP]. It functions in the pathway glycolipid biosynthesis; lipid IV(A) biosynthesis; lipid IV(A) from (3R)-3-hydroxytetradecanoyl-[acyl-carrier-protein] and UDP-N-acetyl-alpha-D-glucosamine: step 1/6. Involved in the biosynthesis of lipid A, a phosphorylated glycolipid that anchors the lipopolysaccharide to the outer membrane of the cell. In Campylobacter curvus (strain 525.92), this protein is Acyl-[acyl-carrier-protein]--UDP-N-acetylglucosamine O-acyltransferase.